Reading from the N-terminus, the 471-residue chain is Regulator of microtubule dynamics protein 3 (471 aa).

Over 1-12 (MSRLGALGGSRA) the chain is Mitochondrial intermembrane. The helical transmembrane segment at 13–35 (GLGLLLGTAAGLGFLCVLYSQRW) threads the bilayer. Residues 36–471 (KRTQRHGRSQ…LEELEVILGK (436 aa)) are Cytoplasmic-facing. S44, S46, S50, and S57 each carry phosphoserine. Residues 91 to 125 (LDRLDFVLTSLMALRREVEELQRSLQGLAGEIVGE) are a coiled coil. The FFAT signature appears at 157–163 (VYFTASS). Phosphothreonine is present on T160. A disordered region spans residues 168–203 (TDAESEGGYTTANAESDYERDSDKESEDAEDEVSCE). S183, S193, S212, and S233 each carry phosphoserine. Residues 191-201 (KESEDAEDEVS) show a composition bias toward acidic residues.

The protein belongs to the RMDN family. As to quaternary structure, interacts with PTPN2. Interacts with microtubules. Interacts with VAPB. Interacts (via FFAT motif) with MOSPD2 (via MSP domain). Interacts (via phosphorylated FFAT motif) with MOSPD2, VAPA and VAPB. Phosphorylation at Thr-160 of the FFAT motif activates interaction with MOSPD2, VAPA and VAPB.

The protein localises to the mitochondrion outer membrane. Its subcellular location is the cytoplasm. It is found in the nucleus. The protein resides in the cytoskeleton. It localises to the spindle. The protein localises to the spindle pole. In terms of biological role, involved in cellular calcium homeostasis regulation. May participate in differentiation and apoptosis of keratinocytes. Overexpression induces apoptosis. The chain is Regulator of microtubule dynamics protein 3 from Rattus norvegicus (Rat).